We begin with the raw amino-acid sequence, 268 residues long: Zygote formation protein zyg1 (268 aa).

Its function is as follows. Plays an essential role in zygote formation by inducing sexual cell fusion. Overexpressing cells eventually formed many loose mounds, in which giant multinucleate cells were surrounded by normal-sized cells. This is Zygote formation protein zyg1 (zyg1) from Dictyostelium mucoroides (Slime mold).